The following is a 160-amino-acid chain: Type-1 angiotensin II receptor-associated protein (160 aa).

The Extracellular portion of the chain corresponds to 1–9; the sequence is MELPAVNLK. A helical transmembrane segment spans residues 10 to 30; that stretch reads VILLVHWLLTTWGCLAFSGSY. Over 31-53 the chain is Cytoplasmic; sequence AWGNFTILALGVWAVAQRDSVDA. Residues 54–74 traverse the membrane as a helical segment; sequence IGMFLGGLVATIFLDIIYISI. At 75-86 the chain is on the extracellular side; that stretch reads FYSSVAVGDTGR. A helical membrane pass occupies residues 87-107; that stretch reads FSAGMAIFSLLLKPFSCCLVY. Residues 108 to 160 lie on the Cytoplasmic side of the membrane; sequence HMHRERGGELPLRSDFFGPSQEHSAYQTIDSSDSPADPLASLENKGQAAPRGY. The interaction with AGTR1 stretch occupies residues 110 to 122; it reads HRERGGELPLRSD. At S127 the chain carries Phosphoserine. Residues 128 to 160 form a disordered region; the sequence is QEHSAYQTIDSSDSPADPLASLENKGQAAPRGY. T135 is modified (phosphothreonine). Positions 137 to 149 are enriched in low complexity; sequence DSSDSPADPLASL. Phosphoserine is present on S138.

As to quaternary structure, interacts with RACK1, and with the carboxy-terminal region of AGTR1.

Its subcellular location is the endoplasmic reticulum membrane. It is found in the golgi apparatus membrane. The protein resides in the cytoplasmic vesicle membrane. Appears to be a negative regulator of type-1 angiotensin II receptor-mediated signaling by regulating receptor internalization as well as mechanism of receptor desensitization such as phosphorylation. May play a role of negative regulator in cardiomyocyte hypertrophy induced by angiotensin II through an inhibition of p38 mitogen-activated protein kinase pathway. Attenuates type-1 angiotensin II receptor growth promoting effect and angiotensin II-induced phosphorylation of protein kinase AKT and of STAT3. In Rattus norvegicus (Rat), this protein is Type-1 angiotensin II receptor-associated protein (Agtrap).